The primary structure comprises 1537 residues: Isocyanide synthase-NRPS hybrid crmA (1537 aa).

The segment at 1–502 is isocyanide synthase domain; sequence MFHKEAGISH…CVKAGYAALF (502 aa). The tract at residues 351 to 391 is disordered; sequence PSVPVSPGMSSPSAASTSSSGASMQGSAATTPETHSPPTFT. Over residues 352-381 the composition is skewed to low complexity; it reads SVPVSPGMSSPSAASTSSSGASMQGSAATT. The span at 382–391 shows a compositional bias: polar residues; sequence PETHSPPTFT. Residues 573–752 form an adenylation region; that stretch reads EAINDPFCFL…GNLIPPREDW (180 aa). Residues 941-1019 enclose the Carrier domain; that stretch reads SSAHSIEDNV…RLSAIIALLA (79 aa). At S977 the chain carries O-(pantetheine 4'-phosphoryl)serine. The transferase stretch occupies residues 1293-1526; the sequence is RCLKTTMFLV…LEMLVTDEEF (234 aa).

In the N-terminal section; belongs to the isocyanide synthase family. This sequence in the C-terminal section; belongs to the NRP synthetase family.

It participates in secondary metabolite biosynthesis. In terms of biological role, isocyanide synthase-NRPS hybrid; part of the crm gene cluster that mediates the biosynthesis of a yet unidentified copper-responsive metabolite. Converts valine into valine isocyanide that then contributes to two distinct biosynthetic pathways under copper-limiting conditions. Reaction of valine isocyanide with the imine intermediate of festuclavine results in formation of the amide bond in fumivaline A. In addition, valine isocyanide contributes to biosynthesis of a family of acylated sugar alcohols, the D-mannitol-derived fumicicolins. CrmA and associated products inhibit microbial growth from copper-starved A.fumigatus. The chain is Isocyanide synthase-NRPS hybrid crmA from Aspergillus fumigatus (strain ATCC MYA-4609 / CBS 101355 / FGSC A1100 / Af293) (Neosartorya fumigata).